The primary structure comprises 429 residues: MTRRLFILITIMLCLIPALLHSQEGYREVTAAGTHKLTLTVDSPRRLGGSDAPQVARETAEALQFDMVLAGPFTVTAPSAAAASAGIRPGEFDFAPWRGAGVDLLVKSGYTVTGNAMTMEFRLYNVTQGKEILAKRYTGRPGDVRRIAHTFSDDIMAALTGERGPFTGKIAFVSTRAGAKAIFLMDYDGHNVQQLTKNRSINLNPDFSPSGKEIIFTSYRQGNPDLFRRELFTGAEARISSYRGINATGAWSPDGKTIALTLSKDGNSEIYTISRDGKNPHRLTNTSAIEVSPAWSPDVRKIVFVSDRLGKPQIFIMNADGTGVRRLTTSGNYNVSPRWSPKGDRIVYSRQEGGFQIYAINPDGTNDTRLTSEGSNEHPRWSPDGRFITFSSTRGGGEGIYVMRADGSGQTRVSGGKGRDSHPTWSPRW.

The first 22 residues, 1-22 (MTRRLFILITIMLCLIPALLHS), serve as a signal peptide directing secretion. 2 disordered regions span residues 362-383 (PDGT…RWSP) and 407-429 (GSGQ…SPRW). Residues 363 to 374 (DGTNDTRLTSEG) are compositionally biased toward polar residues.

Belongs to the TolB family. In terms of assembly, the Tol-Pal system is composed of five core proteins: the inner membrane proteins TolA, TolQ and TolR, the periplasmic protein TolB and the outer membrane protein Pal. They form a network linking the inner and outer membranes and the peptidoglycan layer.

The protein resides in the periplasm. Its function is as follows. Part of the Tol-Pal system, which plays a role in outer membrane invagination during cell division and is important for maintaining outer membrane integrity. This chain is Tol-Pal system protein TolB, found in Geobacter metallireducens (strain ATCC 53774 / DSM 7210 / GS-15).